Consider the following 142-residue polypeptide: FAD synthase (142 aa).

ATP is bound by residues 9-10 (TF), 14-17 (HPGH), and Asp92.

It belongs to the archaeal FAD synthase family. Homodimer. The cofactor is a divalent metal cation.

The catalysed reaction is FMN + ATP + H(+) = FAD + diphosphate. Its pathway is cofactor biosynthesis; FAD biosynthesis; FAD from FMN: step 1/1. In terms of biological role, catalyzes the transfer of the AMP portion of ATP to flavin mononucleotide (FMN) to produce flavin adenine dinucleotide (FAD) coenzyme. The protein is FAD synthase of Methanohalophilus mahii (strain ATCC 35705 / DSM 5219 / SLP).